We begin with the raw amino-acid sequence, 138 residues long: ATP synthase epsilon chain (138 aa).

The protein belongs to the ATPase epsilon chain family. F-type ATPases have 2 components, CF(1) - the catalytic core - and CF(0) - the membrane proton channel. CF(1) has five subunits: alpha(3), beta(3), gamma(1), delta(1), epsilon(1). CF(0) has three main subunits: a, b and c.

It is found in the cell membrane. Its function is as follows. Produces ATP from ADP in the presence of a proton gradient across the membrane. In Streptococcus suis (strain 98HAH33), this protein is ATP synthase epsilon chain.